Here is a 193-residue protein sequence, read N- to C-terminus: dCTP deaminase (193 aa).

Residues 110 to 115 (RSSLAR), Asp-128, 136 to 138 (VLE), Tyr-171, Lys-178, and Gln-182 contribute to the dCTP site. Glu-138 functions as the Proton donor/acceptor in the catalytic mechanism.

Belongs to the dCTP deaminase family. Homotrimer.

The enzyme catalyses dCTP + H2O + H(+) = dUTP + NH4(+). It functions in the pathway pyrimidine metabolism; dUMP biosynthesis; dUMP from dCTP (dUTP route): step 1/2. Catalyzes the deamination of dCTP to dUTP. This Aeromonas salmonicida (strain A449) protein is dCTP deaminase.